The sequence spans 654 residues: Fimbrin-2 (654 aa).

4 Calponin-homology (CH) domains span residues 124–241 (DSEK…KIQL), 269–372 (LPPE…QHRN), 394–500 (SREE…RYNI), and 515–623 (EITD…YWTL). Actin-binding stretches follow at residues 124 to 372 (DSEK…QHRN) and 394 to 623 (SREE…YWTL).

In terms of assembly, interacts with F-actin.

It is found in the cytoplasm. The protein resides in the cytoskeleton. Functionally, cross-links actin filaments (F-actin). Stabilizes and prevents F-actin depolymerization mediated by profilin. May regulate actin cytoarchitecture, cell cycle, cell division, cell elongation and cytoplasmic tractus. This is Fimbrin-2 from Arabidopsis thaliana (Mouse-ear cress).